We begin with the raw amino-acid sequence, 200 residues long: MSFASASINLTHHFLIAMPGLEDAAFARSVVYLCEHSERGALGLIINKPTDITLKGLFDKVDLSLRREDLGREPVFQGGPVQTERGFVLHEPMPDEGRSATDGSAYASTMVIPGGLAMTTSKDVLEALSTGAGPRRVLITLGYSSWGGGQLESELAENAWLTVAADLSVIFDTPAPERYDRALSLLGLEVWMLSPSAGHA.

It belongs to the UPF0301 (AlgH) family.

This is UPF0301 protein Veis_1517 from Verminephrobacter eiseniae (strain EF01-2).